The following is a 569-amino-acid chain: BTB/POZ domain-containing protein At3g50840 (569 aa).

In terms of domain architecture, BTB spans Ser18–Val87. Residues Glu194–Gln459 enclose the NPH3 domain. Residues Ile240–Ser259 show a composition bias toward low complexity. The tract at residues Ile240–Asn261 is disordered. Residue Tyr400 is modified to Phosphotyrosine.

It belongs to the NPH3 family.

Its pathway is protein modification; protein ubiquitination. In terms of biological role, may act as a substrate-specific adapter of an E3 ubiquitin-protein ligase complex (CUL3-RBX1-BTB) which mediates the ubiquitination and subsequent proteasomal degradation of target proteins. The sequence is that of BTB/POZ domain-containing protein At3g50840 from Arabidopsis thaliana (Mouse-ear cress).